The sequence spans 365 residues: 1-deoxy-D-xylulose 5-phosphate reductoisomerase (365 aa).

The NADPH site is built by threonine 7, glycine 8, serine 9, isoleucine 10, alanine 31, lysine 32, asparagine 33, and asparagine 114. Residue lysine 115 participates in 1-deoxy-D-xylulose 5-phosphate binding. Glutamate 116 contacts NADPH. Aspartate 134 contacts Mn(2+). 1-deoxy-D-xylulose 5-phosphate contacts are provided by serine 135, glutamate 136, serine 158, and histidine 181. Glutamate 136 provides a ligand contact to Mn(2+). Glycine 187 lines the NADPH pocket. Residues serine 194, asparagine 199, lysine 200, and glutamate 203 each contribute to the 1-deoxy-D-xylulose 5-phosphate site. Residue glutamate 203 participates in Mn(2+) binding.

It belongs to the DXR family. Mg(2+) serves as cofactor. The cofactor is Mn(2+).

The catalysed reaction is 2-C-methyl-D-erythritol 4-phosphate + NADP(+) = 1-deoxy-D-xylulose 5-phosphate + NADPH + H(+). Its pathway is isoprenoid biosynthesis; isopentenyl diphosphate biosynthesis via DXP pathway; isopentenyl diphosphate from 1-deoxy-D-xylulose 5-phosphate: step 1/6. Functionally, catalyzes the NADPH-dependent rearrangement and reduction of 1-deoxy-D-xylulose-5-phosphate (DXP) to 2-C-methyl-D-erythritol 4-phosphate (MEP). The chain is 1-deoxy-D-xylulose 5-phosphate reductoisomerase from Campylobacter curvus (strain 525.92).